Reading from the N-terminus, the 71-residue chain is uncharacterized protein (71 aa).

This is an uncharacterized protein from Vaccinia virus (strain Copenhagen) (VACV).